Here is a 781-residue protein sequence, read N- to C-terminus: MAVLAYNLGKREINQYFSIKNAKLLAAAAVVLLTVFHAASRHYGSSDTCDWLLSSGRFLGDNVWQPYGCMLHKYKSTEAKFCLREKRIAFVGDSRIRQLFYSFIKMMNPEVKEVGNKHENIPFVDGDSTVNFLWYAEVNNSLKEQLMLWTEGSASKPHVIIIGAATWSIKLHNGKSEALFQYKANLTAIADTLEKLAEHSEVYWVLQDPVYEDVLSESRKMITNEQINLYNEAAVSTLNTSKKKVKFLEASRQAAMETISQSVDGLHLPESTRDVGAMVLMNSMCNKILKPIDGSCCQSAPPLSVLQKLAAAVLLVSVVCFVLLGFSSHRKSRPAPDVESGEEKKHPAAVGQLNPKGPLLAIGKMSLIMLYFYLCDRADIFMKEQKFYTHSAFFIPLIYIFVLGVFYSENSKETKLLNREQTDEWKGWMQLVILIYHISGASAFIPVYMHVRVLVAAYLFQTGYGHFSFFWLKGDFGLYRVCQVLFRLNFLVVVLCLVMDRPYQFYYFVPLVTFWFAVIYATMALWPQILQKQANGSAFWNLALLLKLLGLLLFIGFFAYSQELFEGIFSVWPLSKLFELQGSIHEWWFRWKLDRFAVVNGMLFAFIYLLLQKYQLLSEGKGEPLFSNKISNCLLFVSVVSFMTYSIWASGCKNKSECNEMHPYISVILAFILIRNIPGYARSLYSSFFAWFGKISLELFICQYHIWLAADTKGILVLIPGNPTLNIIVSTFIFVCVAHEISQITNDLAQVAIPKESGPLLKRLLGAGVFLVLVLTLSQKD.

Topologically, residues 1 to 15 (MAVLAYNLGKREINQ) are cytoplasmic. Residues 16-36 (YFSIKNAKLLAAAAVVLLTVF) form a helical membrane-spanning segment. At 37-308 (HAASRHYGSS…SAPPLSVLQK (272 aa)) the chain is on the lumenal side. Catalysis depends on Ser94, which acts as the Acyl-ester intermediate. Asn139, Asn185, and Asn239 each carry an N-linked (GlcNAc...) asparagine glycan. Active-site residues include Asp264 and His267. A helical transmembrane segment spans residues 309 to 329 (LAAAVLLVSVVCFVLLGFSSH). Positions 330–350 (RKSRPAPDVESGEEKKHPAAV) are disordered. Topologically, residues 330 to 354 (RKSRPAPDVESGEEKKHPAAVGQLN) are cytoplasmic. The helical transmembrane segment at 355–375 (PKGPLLAIGKMSLIMLYFYLC) threads the bilayer. Topologically, residues 376-386 (DRADIFMKEQK) are lumenal. Residues 387-407 (FYTHSAFFIPLIYIFVLGVFY) traverse the membrane as a helical segment. The Cytoplasmic portion of the chain corresponds to 408–430 (SENSKETKLLNREQTDEWKGWMQ). A helical transmembrane segment spans residues 431-451 (LVILIYHISGASAFIPVYMHV). Position 452 (Arg452) is a topological domain, lumenal. Residues 453–473 (VLVAAYLFQTGYGHFSFFWLK) traverse the membrane as a helical segment. Residues 474 to 477 (GDFG) are Cytoplasmic-facing. A helical transmembrane segment spans residues 478–498 (LYRVCQVLFRLNFLVVVLCLV). Residues 499–504 (MDRPYQ) are Lumenal-facing. The helical transmembrane segment at 505 to 525 (FYYFVPLVTFWFAVIYATMAL) threads the bilayer. Residues 526–537 (WPQILQKQANGS) lie on the Cytoplasmic side of the membrane. Residues 538-558 (AFWNLALLLKLLGLLLFIGFF) traverse the membrane as a helical segment. Over 559–595 (AYSQELFEGIFSVWPLSKLFELQGSIHEWWFRWKLDR) the chain is Lumenal. Residues 596–616 (FAVVNGMLFAFIYLLLQKYQL) form a helical membrane-spanning segment. The Cytoplasmic segment spans residues 617 to 629 (LSEGKGEPLFSNK). A helical transmembrane segment spans residues 630-650 (ISNCLLFVSVVSFMTYSIWAS). Over 651-660 (GCKNKSECNE) the chain is Lumenal. Asn654 is a glycosylation site (N-linked (GlcNAc...) asparagine). The chain crosses the membrane as a helical span at residues 661–681 (MHPYISVILAFILIRNIPGYA). The Cytoplasmic portion of the chain corresponds to 682 to 687 (RSLYSS). A helical transmembrane segment spans residues 688–708 (FFAWFGKISLELFICQYHIWL). The Lumenal portion of the chain corresponds to 709 to 714 (AADTKG). Residues 715–735 (ILVLIPGNPTLNIIVSTFIFV) traverse the membrane as a helical segment. Residues 736-756 (CVAHEISQITNDLAQVAIPKE) lie on the Cytoplasmic side of the membrane. Residues 757–777 (SGPLLKRLLGAGVFLVLVLTL) traverse the membrane as a helical segment. Residues 778-781 (SQKD) are Lumenal-facing.

It belongs to the PC-esterase family. CASD1 subfamily.

Its subcellular location is the golgi apparatus membrane. It catalyses the reaction CMP-N-acetyl-beta-neuraminate + acetyl-CoA = CMP-N-acetyl-9-O-acetyl-beta-neuraminate + CoA. The enzyme catalyses a ganglioside GD3 (d18:1(4E)) + acetyl-CoA = a ganglioside Ac-O-7-GD3(d18:1(4E)) + CoA. The catalysed reaction is CMP-N-acetyl-beta-neuraminate + acetyl-CoA = CMP-N-acetyl-7-O-acetyl-beta-neuraminate + CoA. Functionally, key enzyme in the biosynthesis of O-acetylated (O-Ac) sialoglycans such as gangliosides O-AcGD3 and O-AcGD2, which affect various processes such as cell-cell interactions, host-pathogen recognition. Catalyzes the transfer of an acetyl group from a donor, the acetyl-coenzyme-A molecule (acetyl-CoA), to the C7/8/9 OH-position of a sialic acid residue. The primary site of O-acetyl group transfer on sialic acid seems to depend on cell type and can be C7, from which the O-acetyl group could subsequently migrate to the C8 and then to the C9 position, or at C9 with possibility of migrating to the C8 and then to the C7 position. Together with ST8SIA1 (GD3 synthase) it increases the levels of ganglioside Ac-O-7-GD3. Can transfer the acetyl group from acetyl-CoA to free sialate (N-acetylneuraminate, Neu5Ac) in vitro, but has preferred substrate specificity for CMP-activated sialate (CMP-Neu5Ac), resulting in the formation of 9-O-acetylated CMP-Neu5Ac (CMP-Neu5,9Ac2). CMP-Neu5,9Ac2 may be used by sialyltransferases as a sialate donor for glycoconjugate acceptors such as ganglioside GD3. O-acetylation at position C9 of ganglioside GD3 can counteract the pro-apoptotic effects of the ganglioside GD3 in tumor cells. This Danio rerio (Zebrafish) protein is N-acetylneuraminate (7)9-O-acetyltransferase.